A 207-amino-acid polypeptide reads, in one-letter code: Zinc finger protein 487 (207 aa).

The KRAB domain maps to 1–43 (MLENYSLLLSVGYCITKPEVVCKLEHGQVLWILEEESPSQSHL). A C2H2-type; atypical zinc finger spans residues 177–202 (KQCFEYNQCGKAFHEEAACSTHKRVC).

It belongs to the krueppel C2H2-type zinc-finger protein family.

It is found in the nucleus. May be involved in transcriptional regulation. This is Zinc finger protein 487 (ZNF487) from Homo sapiens (Human).